The chain runs to 301 residues: Probable alpha-L-glutamate ligase (301 aa).

The 184-residue stretch at 104–287 (LQLLARKGIG…VAGQLIDYIE (184 aa)) folds into the ATP-grasp domain. ATP-binding positions include K141, 178–179 (EF), D187, and 211–213 (RSN). Mg(2+) contacts are provided by D248, E260, and N262. Mn(2+)-binding residues include D248, E260, and N262.

It belongs to the RimK family. Mg(2+) is required as a cofactor. Mn(2+) serves as cofactor.

In Maridesulfovibrio salexigens (strain ATCC 14822 / DSM 2638 / NCIMB 8403 / VKM B-1763) (Desulfovibrio salexigens), this protein is Probable alpha-L-glutamate ligase.